We begin with the raw amino-acid sequence, 213 residues long: Cytochrome b6 (213 aa).

The helical transmembrane segment at isoleucine 30–valine 50 threads the bilayer. Cysteine 33 is a heme c binding site. 2 residues coordinate heme b: histidine 84 and histidine 98. A run of 3 helical transmembrane segments spans residues cysteine 88–phenylalanine 108, leucine 114–tyrosine 134, and leucine 184–isoleucine 204. Residues histidine 185 and histidine 200 each coordinate heme b.

This sequence belongs to the cytochrome b family. PetB subfamily. The subunits of the cytochrome bc complex are a Rieske Fe-S protein (PetC), cytochrome b6 (PetB), subunit IV (PetD), and a diheme cytochrome c (PetX). The cofactor is heme b. Heme c is required as a cofactor.

The protein localises to the cell membrane. Functionally, component of the cytochrome bc complex which donates electrons to the photosynthetic reaction center. The sequence is that of Cytochrome b6 from Heliobacterium modesticaldum (strain ATCC 51547 / Ice1).